Here is a 189-residue protein sequence, read N- to C-terminus: Heme-binding protein 1 (189 aa).

Belongs to the HEBP family. As to quaternary structure, monomer.

The protein localises to the cytoplasm. Functionally, may bind free porphyrinogens that may be present in the cell and thus facilitate removal of these potentially toxic compound. Binds with a high affinity to one molecule of heme or porphyrins. It binds metalloporphyrins, free porphyrins and N-methylprotoporphyrin with similar affinities. The protein is Heme-binding protein 1 (HEBP1) of Sus scrofa (Pig).